We begin with the raw amino-acid sequence, 306 residues long: Recombination-associated protein RdgC (306 aa).

Belongs to the RdgC family.

It localises to the cytoplasm. The protein resides in the nucleoid. May be involved in recombination. The sequence is that of Recombination-associated protein RdgC from Pseudomonas aeruginosa (strain LESB58).